Consider the following 344-residue polypeptide: DNA-directed RNA polymerase subunit alpha (344 aa).

An alpha N-terminal domain (alpha-NTD) region spans residues 1–232 (MGQYTINLRE…HLFLPPFGLE (232 aa)). The interval 270–344 (LIKDQFLEYS…KRFGINLKLK (75 aa)) is alpha C-terminal domain (alpha-CTD).

It belongs to the RNA polymerase alpha chain family. As to quaternary structure, in plastids the minimal PEP RNA polymerase catalytic core is composed of four subunits: alpha, beta, beta', and beta''. When a (nuclear-encoded) sigma factor is associated with the core the holoenzyme is formed, which can initiate transcription.

The protein resides in the plastid. The protein localises to the chloroplast. The catalysed reaction is RNA(n) + a ribonucleoside 5'-triphosphate = RNA(n+1) + diphosphate. In terms of biological role, DNA-dependent RNA polymerase catalyzes the transcription of DNA into RNA using the four ribonucleoside triphosphates as substrates. The sequence is that of DNA-directed RNA polymerase subunit alpha from Spirogyra maxima (Green alga).